Consider the following 208-residue polypeptide: Glutathione S-transferase 2 (208 aa).

One can recognise a GST N-terminal domain in the interval 1-78; that stretch reads MSYKLTYFSI…HLARKYNLNG (78 aa). Glutathione is bound by residues tyrosine 7, lysine 42, 49–50, and 62–63; these read QL and QS. Positions 80–200 constitute a GST C-terminal domain; the sequence is NEMETTYIDM…YCEKRDAAKV (121 aa).

Belongs to the GST superfamily. Pi family. Homodimer. In terms of tissue distribution, hypodermis, wall of the seminal receptacle and spermatozoa of adult worms.

It catalyses the reaction RX + glutathione = an S-substituted glutathione + a halide anion + H(+). Its function is as follows. Appears to play a central role in the parasite detoxification system. In Onchocerca volvulus, this protein is Glutathione S-transferase 2 (GST2).